Reading from the N-terminus, the 251-residue chain is MTSLVSLENVSVSFGQRRVLSDVSLELKPGKILTLLGPNGAGKSTLVRVVLGLVTPDEGVIKRNGKLRIGYVPQKLYLDTTLPLTVNRFLRLRPGTHKEDILPALKRVQAGHLINAPMQKLSGGETQRVLLARALLNRPQLLVLDEPTQGVDVNGQVALYDLIDQLRRELDCGVLMVSHDLHLVMAKTDEVLCLNHHICCSGTPEVVSLHPEFISMFGPRGAEQLGIYRHHHNHRHDLQGRIVLRRGNDRS.

An ABC transporter domain is found at 5–220 (VSLENVSVSF…PEFISMFGPR (216 aa)). 37 to 44 (GPNGAGKS) is an ATP binding site.

The protein belongs to the ABC transporter superfamily. Zinc importer (TC 3.A.1.15.5) family. As to quaternary structure, the complex is composed of two ATP-binding proteins (ZnuC), two transmembrane proteins (ZnuB) and a solute-binding protein (ZnuA).

It localises to the cell inner membrane. The catalysed reaction is Zn(2+)(out) + ATP(in) + H2O(in) = Zn(2+)(in) + ADP(in) + phosphate(in) + H(+)(in). In terms of biological role, part of the ABC transporter complex ZnuABC involved in zinc import. Responsible for energy coupling to the transport system. This is Zinc import ATP-binding protein ZnuC from Escherichia coli O157:H7.